The chain runs to 207 residues: Ribosomal RNA small subunit methyltransferase G (207 aa).

Residues Gly73, Leu78, 124-125, and Arg139 contribute to the S-adenosyl-L-methionine site; that span reads VE.

The protein belongs to the methyltransferase superfamily. RNA methyltransferase RsmG family.

The protein localises to the cytoplasm. It catalyses the reaction guanosine(527) in 16S rRNA + S-adenosyl-L-methionine = N(7)-methylguanosine(527) in 16S rRNA + S-adenosyl-L-homocysteine. Its function is as follows. Specifically methylates the N7 position of guanine in position 527 of 16S rRNA. This Shigella flexneri protein is Ribosomal RNA small subunit methyltransferase G.